Reading from the N-terminus, the 124-residue chain is Small ribosomal subunit protein uS12 (124 aa).

Positions methionine 1–aspartate 25 are disordered. A 3-methylthioaspartic acid modification is found at aspartate 89.

Belongs to the universal ribosomal protein uS12 family. In terms of assembly, part of the 30S ribosomal subunit. Contacts proteins S8 and S17. May interact with IF1 in the 30S initiation complex.

Functionally, with S4 and S5 plays an important role in translational accuracy. In terms of biological role, interacts with and stabilizes bases of the 16S rRNA that are involved in tRNA selection in the A site and with the mRNA backbone. Located at the interface of the 30S and 50S subunits, it traverses the body of the 30S subunit contacting proteins on the other side and probably holding the rRNA structure together. The combined cluster of proteins S8, S12 and S17 appears to hold together the shoulder and platform of the 30S subunit. This Xanthomonas campestris pv. campestris (strain 8004) protein is Small ribosomal subunit protein uS12.